The sequence spans 864 residues: Bifunctional uridylyltransferase/uridylyl-removing enzyme (864 aa).

The interval 1–328 is uridylyltransferase; sequence MLFPYFPLSE…QTNEPVQVRL (328 aa). Residues 329–686 form a uridylyl-removing region; it reads LDKEFQCVNN…ISNRFSEGGT (358 aa). In terms of domain architecture, HD spans 446–562; the sequence is VDEHIVRTLL…LHFAEAVQNN (117 aa). 2 consecutive ACT domains span residues 687 to 766 and 793 to 864; these read EIFV…TFRA and EMEL…LEPK.

This sequence belongs to the GlnD family. Requires Mg(2+) as cofactor.

The enzyme catalyses [protein-PII]-L-tyrosine + UTP = [protein-PII]-uridylyl-L-tyrosine + diphosphate. The catalysed reaction is [protein-PII]-uridylyl-L-tyrosine + H2O = [protein-PII]-L-tyrosine + UMP + H(+). With respect to regulation, uridylyltransferase (UTase) activity is inhibited by glutamine, while glutamine activates uridylyl-removing (UR) activity. Modifies, by uridylylation and deuridylylation, the PII regulatory proteins (GlnB and homologs), in response to the nitrogen status of the cell that GlnD senses through the glutamine level. Under low glutamine levels, catalyzes the conversion of the PII proteins and UTP to PII-UMP and PPi, while under higher glutamine levels, GlnD hydrolyzes PII-UMP to PII and UMP (deuridylylation). Thus, controls uridylylation state and activity of the PII proteins, and plays an important role in the regulation of nitrogen assimilation and metabolism. The protein is Bifunctional uridylyltransferase/uridylyl-removing enzyme of Pasteurella multocida (strain Pm70).